A 259-amino-acid chain; its full sequence is Imidazole glycerol phosphate synthase subunit HisF (259 aa).

Residues aspartate 11 and aspartate 130 contribute to the active site.

This sequence belongs to the HisA/HisF family. As to quaternary structure, heterodimer of HisH and HisF.

Its subcellular location is the cytoplasm. It catalyses the reaction 5-[(5-phospho-1-deoxy-D-ribulos-1-ylimino)methylamino]-1-(5-phospho-beta-D-ribosyl)imidazole-4-carboxamide + L-glutamine = D-erythro-1-(imidazol-4-yl)glycerol 3-phosphate + 5-amino-1-(5-phospho-beta-D-ribosyl)imidazole-4-carboxamide + L-glutamate + H(+). It functions in the pathway amino-acid biosynthesis; L-histidine biosynthesis; L-histidine from 5-phospho-alpha-D-ribose 1-diphosphate: step 5/9. Functionally, IGPS catalyzes the conversion of PRFAR and glutamine to IGP, AICAR and glutamate. The HisF subunit catalyzes the cyclization activity that produces IGP and AICAR from PRFAR using the ammonia provided by the HisH subunit. This Nitratidesulfovibrio vulgaris (strain DP4) (Desulfovibrio vulgaris) protein is Imidazole glycerol phosphate synthase subunit HisF.